The following is an 82-amino-acid chain: ATP synthase subunit c, chloroplastic (82 aa).

The next 2 membrane-spanning stretches (helical) occupy residues 3 to 23 (PLICAASVVGAGLAIGLGAIG) and 57 to 77 (LAFMEALTIYGLVVALALMFA).

Belongs to the ATPase C chain family. As to quaternary structure, F-type ATPases have 2 components, F(1) - the catalytic core - and F(0) - the membrane proton channel. F(1) has five subunits: alpha(3), beta(3), gamma(1), delta(1), epsilon(1). F(0) has four main subunits: a(1), b(1), b'(1) and c(10-14). The alpha and beta chains form an alternating ring which encloses part of the gamma chain. F(1) is attached to F(0) by a central stalk formed by the gamma and epsilon chains, while a peripheral stalk is formed by the delta, b and b' chains.

The protein resides in the plastid. It is found in the chloroplast thylakoid membrane. In terms of biological role, f(1)F(0) ATP synthase produces ATP from ADP in the presence of a proton or sodium gradient. F-type ATPases consist of two structural domains, F(1) containing the extramembraneous catalytic core and F(0) containing the membrane proton channel, linked together by a central stalk and a peripheral stalk. During catalysis, ATP synthesis in the catalytic domain of F(1) is coupled via a rotary mechanism of the central stalk subunits to proton translocation. Functionally, key component of the F(0) channel; it plays a direct role in translocation across the membrane. A homomeric c-ring of between 10-14 subunits forms the central stalk rotor element with the F(1) delta and epsilon subunits. This is ATP synthase subunit c, chloroplastic from Ostreococcus tauri.